Reading from the N-terminus, the 224-residue chain is Large ribosomal subunit protein bL25 (224 aa).

The protein belongs to the bacterial ribosomal protein bL25 family. CTC subfamily. As to quaternary structure, part of the 50S ribosomal subunit; part of the 5S rRNA/L5/L18/L25 subcomplex. Contacts the 5S rRNA. Binds to the 5S rRNA independently of L5 and L18.

In terms of biological role, this is one of the proteins that binds to the 5S RNA in the ribosome where it forms part of the central protuberance. This Psychrobacter arcticus (strain DSM 17307 / VKM B-2377 / 273-4) protein is Large ribosomal subunit protein bL25.